Here is a 240-residue protein sequence, read N- to C-terminus: Uridylate kinase (240 aa).

13-16 (KLSG) contributes to the ATP binding site. Residues 21 to 26 (GEKGFG) are involved in allosteric activation by GTP. Gly55 contacts UMP. ATP contacts are provided by Gly56 and Arg60. UMP-binding positions include Asp75 and 136 to 143 (IGNPYFST). Residues Asn164, Tyr170, and Asp173 each coordinate ATP.

The protein belongs to the UMP kinase family. As to quaternary structure, homohexamer.

The protein localises to the cytoplasm. It carries out the reaction UMP + ATP = UDP + ADP. It functions in the pathway pyrimidine metabolism; CTP biosynthesis via de novo pathway; UDP from UMP (UMPK route): step 1/1. With respect to regulation, allosterically activated by GTP. Inhibited by UTP. Its function is as follows. Catalyzes the reversible phosphorylation of UMP to UDP. The polypeptide is Uridylate kinase (Staphylococcus aureus (strain Newman)).